The following is a 101-amino-acid chain: Small ribosomal subunit protein bS18c (101 aa).

It belongs to the bacterial ribosomal protein bS18 family. In terms of assembly, component of the chloroplast small ribosomal subunit (SSU). Mature 70S chloroplast ribosomes of higher plants consist of a small (30S) and a large (50S) subunit. The 30S small subunit contains 1 molecule of ribosomal RNA (16S rRNA) and 24 different proteins. The 50S large subunit contains 3 rRNA molecules (23S, 5S and 4.5S rRNA) and 33 different proteins.

It is found in the plastid. Its subcellular location is the chloroplast. Component of the chloroplast ribosome (chloro-ribosome), a dedicated translation machinery responsible for the synthesis of chloroplast genome-encoded proteins, including proteins of the transcription and translation machinery and components of the photosynthetic apparatus. The chain is Small ribosomal subunit protein bS18c (RPS18) from Spinacia oleracea (Spinach).